The following is a 373-amino-acid chain: Glutamate 5-kinase (373 aa).

K15 serves as a coordination point for ATP. Residues S55, D142, and N154 each contribute to the substrate site. Residues T174 to D175 and T216 to K222 contribute to the ATP site. The PUA domain occupies S281–K359.

It belongs to the glutamate 5-kinase family.

The protein resides in the cytoplasm. It catalyses the reaction L-glutamate + ATP = L-glutamyl 5-phosphate + ADP. Its pathway is amino-acid biosynthesis; L-proline biosynthesis; L-glutamate 5-semialdehyde from L-glutamate: step 1/2. Catalyzes the transfer of a phosphate group to glutamate to form L-glutamate 5-phosphate. The sequence is that of Glutamate 5-kinase from Geobacter sulfurreducens (strain ATCC 51573 / DSM 12127 / PCA).